A 3068-amino-acid chain; its full sequence is Genome polyprotein (3068 aa).

The 144-residue stretch at threonine 144–tyrosine 287 folds into the Peptidase S30 domain. Catalysis depends on for P1 proteinase activity residues histidine 195, aspartate 204, and serine 238. The short motif at lysine 337–cysteine 340 is the Involved in interaction with stylet and aphid transmission element. An Involved in virions binding and aphid transmission motif is present at residues proline 595–lysine 597. The Peptidase C6 domain occupies leucine 621 to glycine 743. Residues cysteine 629 and histidine 702 each act as for helper component proteinase activity in the active site. A Helicase ATP-binding domain is found at aspartate 1228 to glutamate 1380. Position 1241–1248 (glycine 1241–serine 1248) interacts with ATP. The short motif at aspartate 1330–histidine 1333 is the DECH box element. The region spanning aspartate 1399 to serine 1558 is the Helicase C-terminal domain. The short motif at lysine 1884 to threonine 1891 is the Nuclear localization signal element. At tyrosine 1906 the chain carries O-(5'-phospho-RNA)-tyrosine. In terms of domain architecture, Peptidase C4 spans alanine 2031–lysine 2249. Residues histidine 2076, aspartate 2111, and cysteine 2181 each act as for nuclear inclusion protein A activity in the active site. Residues tryptophan 2518–leucine 2642 form the RdRp catalytic domain. The segment at serine 2796–serine 2833 is disordered. Over residues methionine 2822–serine 2833 the composition is skewed to basic and acidic residues. The residue at position 3051 (threonine 3051) is a Phosphothreonine.

This sequence belongs to the potyviridae genome polyprotein family. Interacts with host eIF4E protein (via cap-binding region); this interaction mediates the translation of the VPg-viral RNA conjugates. Part of a complex that comprises VPg, RNA, host EIF4E and EIF4G; this interaction mediates the translation of the VPg-viral RNA conjugates. Post-translationally, VPg is uridylylated by the polymerase and is covalently attached to the 5'-end of the genomic RNA. This uridylylated form acts as a nucleotide-peptide primer for the polymerase. Potyviral RNA is expressed as two polyproteins which undergo post-translational proteolytic processing. Genome polyprotein is processed by NIa-pro, P1 and HC-pro proteinases resulting in the production of at least ten individual proteins. P3N-PIPO polyprotein is cleaved by P1 and HC-pro proteinases resulting in the production of three individual proteins. The P1 proteinase and the HC-pro cleave only their respective C-termini autocatalytically. 6K1 is essential for proper proteolytic separation of P3 from CI.

It localises to the host cytoplasmic vesicle. The protein resides in the host nucleus. It is found in the virion. The catalysed reaction is RNA(n) + a ribonucleoside 5'-triphosphate = RNA(n+1) + diphosphate. It catalyses the reaction Hydrolyzes glutaminyl bonds, and activity is further restricted by preferences for the amino acids in P6 - P1' that vary with the species of potyvirus, e.g. Glu-Xaa-Xaa-Tyr-Xaa-Gln-|-(Ser or Gly) for the enzyme from tobacco etch virus. The natural substrate is the viral polyprotein, but other proteins and oligopeptides containing the appropriate consensus sequence are also cleaved.. It carries out the reaction Hydrolyzes a Gly-|-Gly bond at its own C-terminus, commonly in the sequence -Tyr-Xaa-Val-Gly-|-Gly, in the processing of the potyviral polyprotein.. Its function is as follows. Required for aphid transmission and also has proteolytic activity. Only cleaves a Gly-Gly dipeptide at its own C-terminus. Interacts with virions and aphid stylets. Acts as a suppressor of RNA-mediated gene silencing, also known as post-transcriptional gene silencing (PTGS), a mechanism of plant viral defense that limits the accumulation of viral RNAs. May have RNA-binding activity. Functionally, has helicase activity. It may be involved in replication. In terms of biological role, indispensable for virus replication. Reduces the abundance of host transcripts related to jasmonic acid biosynthesis therefore altering the host defenses. In order to increase its own stability, decreases host protein degradation pathways. Indispensable for virus replication. Its function is as follows. Mediates the cap-independent, EIF4E-dependent translation of viral genomic RNAs. Binds to the cap-binding site of host EIF4E and thus interferes with the host EIF4E-dependent mRNA export and translation. VPg-RNA directly binds EIF4E and is a template for transcription. Also forms trimeric complexes with EIF4E-EIF4G, which are templates for translation. Functionally, has RNA-binding and proteolytic activities. In terms of biological role, an RNA-dependent RNA polymerase that plays an essential role in the virus replication. Involved in aphid transmission, cell-to-cell and systemis movement, encapsidation of the viral RNA and in the regulation of viral RNA amplification. The sequence is that of Genome polyprotein from Pepper mottle virus (isolate California) (PeMV).